Here is a 417-residue protein sequence, read N- to C-terminus: UDP-N-acetylglucosamine 1-carboxyvinyltransferase (417 aa).

22-23 (KN) lines the phosphoenolpyruvate pocket. R92 contributes to the UDP-N-acetyl-alpha-D-glucosamine binding site. Catalysis depends on C116, which acts as the Proton donor. Position 116 is a 2-(S-cysteinyl)pyruvic acid O-phosphothioketal (C116). D304 and I326 together coordinate UDP-N-acetyl-alpha-D-glucosamine.

The protein belongs to the EPSP synthase family. MurA subfamily.

Its subcellular location is the cytoplasm. It carries out the reaction phosphoenolpyruvate + UDP-N-acetyl-alpha-D-glucosamine = UDP-N-acetyl-3-O-(1-carboxyvinyl)-alpha-D-glucosamine + phosphate. It functions in the pathway cell wall biogenesis; peptidoglycan biosynthesis. Its function is as follows. Cell wall formation. Adds enolpyruvyl to UDP-N-acetylglucosamine. The polypeptide is UDP-N-acetylglucosamine 1-carboxyvinyltransferase (Desulforapulum autotrophicum (strain ATCC 43914 / DSM 3382 / VKM B-1955 / HRM2) (Desulfobacterium autotrophicum)).